The sequence spans 202 residues: GTP cyclohydrolase 1 (202 aa).

3 residues coordinate Zn(2+): cysteine 90, histidine 93, and cysteine 163.

It belongs to the GTP cyclohydrolase I family. As to quaternary structure, toroid-shaped homodecamer, composed of two pentamers of five dimers.

It carries out the reaction GTP + H2O = 7,8-dihydroneopterin 3'-triphosphate + formate + H(+). The protein operates within cofactor biosynthesis; 7,8-dihydroneopterin triphosphate biosynthesis; 7,8-dihydroneopterin triphosphate from GTP: step 1/1. This chain is GTP cyclohydrolase 1, found in Mycolicibacterium vanbaalenii (strain DSM 7251 / JCM 13017 / BCRC 16820 / KCTC 9966 / NRRL B-24157 / PYR-1) (Mycobacterium vanbaalenii).